A 250-amino-acid polypeptide reads, in one-letter code: 5-oxoprolinase subunit A (250 aa).

The protein belongs to the LamB/PxpA family. As to quaternary structure, forms a complex composed of PxpA, PxpB and PxpC.

The enzyme catalyses 5-oxo-L-proline + ATP + 2 H2O = L-glutamate + ADP + phosphate + H(+). In terms of biological role, catalyzes the cleavage of 5-oxoproline to form L-glutamate coupled to the hydrolysis of ATP to ADP and inorganic phosphate. The protein is 5-oxoprolinase subunit A of Staphylococcus aureus (strain Mu3 / ATCC 700698).